Here is a 586-residue protein sequence, read N- to C-terminus: MRQAAPPAARMRMDAKVISKAKLPSRHVTVGPARAPHRSYLYAMGLSAAEIAQPLVGVASCWNEAAPCNISLMRQAQVVKKGVAAANGTPREFCTITVTDGIAMGHQGMKSSLVSREVIADSVELTMRGHCYDALVGLAGCDKSLPGMMMAMVRLNVPSIFIYGGSILPGSYRGRQITVQDVFEAVGQHSVGTIGDAELLEIEQAACPSAGSCGAQFTANTMATVAEAIGLALPYSCGAPAPYEMRDRFNFASGEKIMELIAKNIRPRDIITLKALENAATVVSATGGSTNAALHLPAIAHEAGIKFDLFDVARIFEKTPYIADLKPGGKYVAKDMFEAGGIPLLMKTLLDHGYLHGDCLTVTGRTLAENMEHVAWNEHQDVVRPANRPITQTGGVVGLKGNLAPEGAIVKVAGMTELKFSGPARCFDSEEECFEAVTQRNYREGEVLVIRYEGPRGGPGMREMLSTTAALYGQGMGGKVALITDGRFSGATRGFCIGHVGPEAAVGGPIGLIRDGDVISIDAVNGTIEVALSDSELAARAKTWKARTTDYQSGAIWKYAQTVGSARDGAVTHPGGAKETHCYADI.

Cys-68 provides a ligand contact to [2Fe-2S] cluster. Position 100 (Asp-100) interacts with Mg(2+). Cys-141 serves as a coordination point for [2Fe-2S] cluster. The Mg(2+) site is built by Asp-142 and Lys-143. Position 143 is an N6-carboxylysine (Lys-143). Position 213 (Cys-213) interacts with [2Fe-2S] cluster. Mg(2+) is bound at residue Glu-463. Residue Ser-489 is the Proton acceptor of the active site.

Belongs to the IlvD/Edd family. As to quaternary structure, homodimer. [2Fe-2S] cluster serves as cofactor. It depends on Mg(2+) as a cofactor.

The enzyme catalyses (2R)-2,3-dihydroxy-3-methylbutanoate = 3-methyl-2-oxobutanoate + H2O. It catalyses the reaction (2R,3R)-2,3-dihydroxy-3-methylpentanoate = (S)-3-methyl-2-oxopentanoate + H2O. It participates in amino-acid biosynthesis; L-isoleucine biosynthesis; L-isoleucine from 2-oxobutanoate: step 3/4. It functions in the pathway amino-acid biosynthesis; L-valine biosynthesis; L-valine from pyruvate: step 3/4. Its function is as follows. Functions in the biosynthesis of branched-chain amino acids. Catalyzes the dehydration of (2R,3R)-2,3-dihydroxy-3-methylpentanoate (2,3-dihydroxy-3-methylvalerate) into 2-oxo-3-methylpentanoate (2-oxo-3-methylvalerate) and of (2R)-2,3-dihydroxy-3-methylbutanoate (2,3-dihydroxyisovalerate) into 2-oxo-3-methylbutanoate (2-oxoisovalerate), the penultimate precursor to L-isoleucine and L-valine, respectively. In Mesorhizobium japonicum (strain LMG 29417 / CECT 9101 / MAFF 303099) (Mesorhizobium loti (strain MAFF 303099)), this protein is Dihydroxy-acid dehydratase 2.